A 133-amino-acid polypeptide reads, in one-letter code: Small ribosomal subunit protein uS11 (133 aa).

This sequence belongs to the universal ribosomal protein uS11 family. In terms of assembly, part of the 30S ribosomal subunit. Interacts with proteins S7 and S18. Binds to IF-3.

Located on the platform of the 30S subunit, it bridges several disparate RNA helices of the 16S rRNA. Forms part of the Shine-Dalgarno cleft in the 70S ribosome. The chain is Small ribosomal subunit protein uS11 from Ralstonia pickettii (strain 12J).